The chain runs to 56 residues: MSGSGAMLLGLLILVAMATSLDTREICWNHSECDDPSEWCCRMGSGHGSCLPVCRP.

The N-terminal stretch at 1–23 (MSGSGAMLLGLLILVAMATSLDT) is a signal peptide. 3 cysteine pairs are disulfide-bonded: cysteine 27-cysteine 41, cysteine 33-cysteine 50, and cysteine 40-cysteine 54.

In terms of tissue distribution, expressed by the venom duct.

The protein localises to the secreted. Probable neurotoxin. The sequence is that of Conotoxin Cal6.41a from Californiconus californicus (California cone).